We begin with the raw amino-acid sequence, 311 residues long: Pyrimidine-specific ribonucleoside hydrolase RihA (311 aa).

Residue His-240 is part of the active site.

The protein belongs to the IUNH family. RihA subfamily.

Functionally, hydrolyzes cytidine or uridine to ribose and cytosine or uracil, respectively. In Salmonella agona (strain SL483), this protein is Pyrimidine-specific ribonucleoside hydrolase RihA.